Consider the following 92-residue polypeptide: Small ribosomal subunit protein uS17 (92 aa).

The protein belongs to the universal ribosomal protein uS17 family. In terms of assembly, part of the 30S ribosomal subunit.

One of the primary rRNA binding proteins, it binds specifically to the 5'-end of 16S ribosomal RNA. This is Small ribosomal subunit protein uS17 from Corynebacterium glutamicum (strain ATCC 13032 / DSM 20300 / JCM 1318 / BCRC 11384 / CCUG 27702 / LMG 3730 / NBRC 12168 / NCIMB 10025 / NRRL B-2784 / 534).